Reading from the N-terminus, the 1104-residue chain is MAATAGGGPGAAAGAVGAGGAAAASGLAVYRRKDGGPASKFWESPDTVSQLDSVRVWLGKHYKKYVHADAPTNKTLAGLVVQLLQFQEDAFGKHVTNPAFTKLPAKCFMDFKAGGTLCHILGAAYKYKNEQGWRRFDLQNPSRMDRNVEMFMNIEKTLVQNNCLTRPNIYLIPDIDLKLANKLKDIIKRHQGTFTDEKSKASHHIYPYPSSQEDEEWLRPVMRRDKQVLVHWGFYPDSYDTWVHSNDVDAEIEDAPIPEKPWKVHVKWILDTDVFNEWMNEEDYEVDENRKPVSFRQRISTKNEEPVRSPERRDRKASANSRKRKPSPSPPPPTATESRKKSGKKGQASLYGKRRSQKEEDEQEDLTKDMEDPTPVPNIEEVVLPKNVNPKKDSENTPVKGGTVADLDEQDEEAVTTGGKEDEDPSKGDPSRSVDPGEDNVTEQTNHIIIPSYASWFDYNCIHVIERRALPEFFNGKNKSKTPEIYLAYRNFMIDTYRLNPQEYLTSTACRRNLTGDVCAVMRVHAFLEQWGLVNYQVDPESRPMAMGPPPTPHFNVLADTPSGLVPLHLRSPQVPAAQQMLNFPEKNKEKPIDLQNFGLRTDIYSKKTLAKSKGASAGREWTEQETLLLLEALEMYKDDWNKVSEHVGSRTQDECILHFLRLPIEDPYLENSDASLGPLAYQPVPFSQSGNPVMSTVAFLASVVDPRVASAAAKAALEEFSRVREEVPLELVEAHVKKVQEAARASGKVDPTYGLESSCIAGTGPDEPEKLEGSEEEKMETDPDGQQPEKAENKVENESDEGDKIQDRENEKNTEKEQDSDVSEDVKPEEKENEENKELTDTCKERESDAGKKKVEHEISEGNVATAAAAALASAATKAKHLAAVEERKIKSLVALLVETQMKKLEIKLRHFEELETIMDREKEALEQQRQQLLTERQNFHMEQLKYAELRARQQMEQQQQHGQTPQQAHQHTGGPGMAPLGATGHPGMMPHQQPPPYPLMHHQMPPPHPPQPGQIPGPGSMMPGQPMPGRMIPAVAANIHPTGSGPTPPGMPPMPGNILGPRVPLTAPNGMYPPPPQQQQPPPPADGVPPPPAPGPPASATP.

The marR-like, BRCT and chromo domains module stretch occupies residues 27–301 (LAVYRRKDGG…PVSFRQRIST (275 aa)). The MarR-like domain occupies 37-163 (PASKFWESPD…IEKTLVQNNC (127 aa)). The region spanning 167–210 (PNIYLIPDIDLKLANKLKDIIKRHQGTFTDEKSKASHHIYPYPS) is the BRCT; N-terminus domain. Lys-178 is covalently cross-linked (Glycyl lysine isopeptide (Lys-Gly) (interchain with G-Cter in SUMO2)). One can recognise a Chromo domain in the interval 216-244 (EWLRPVMRRDKQVLVHWGFYPDSYDTWVH). The BRCT; C-terminus domain maps to 260 to 284 (KPWKVHVKWILDTDVFNEWMNEEDY). Residues 295-445 (FRQRISTKNE…PGEDNVTEQT (151 aa)) form a disordered region. Over residues 301–317 (TKNEEPVRSPERRDRKA) the composition is skewed to basic and acidic residues. 3 positions are modified to phosphoserine: Ser-309, Ser-327, and Ser-329. At Thr-334 the chain carries Phosphothreonine. N6-acetyllysine is present on residues Lys-344 and Lys-345. The residue at position 349 (Ser-349) is a Phosphoserine. Lys-353 carries the post-translational modification N6-acetyllysine. Ser-356 carries the post-translational modification Phosphoserine. Lys-358 is subject to N6-acetyllysine; alternate. Residue Lys-358 forms a Glycyl lysine isopeptide (Lys-Gly) (interchain with G-Cter in SUMO2); alternate linkage. Thr-397 carries the phosphothreonine modification. Residues 448 to 545 (IIIPSYASWF…YQVDPESRPM (98 aa)) form the SWIRM domain. Ser-572 carries the post-translational modification Phosphoserine. Lys-591 is covalently cross-linked (Glycyl lysine isopeptide (Lys-Gly) (interchain with G-Cter in SUMO2)). An SANT domain is found at 617 to 668 (SAGREWTEQETLLLLEALEMYKDDWNKVSEHVGSRTQDECILHFLRLPIEDP). Residue Lys-738 forms a Glycyl lysine isopeptide (Lys-Gly) (interchain with G-Cter in SUMO2) linkage. Residues 744 to 859 (ARASGKVDPT…DAGKKKVEHE (116 aa)) form a disordered region. Ser-775 is subject to Phosphoserine. Residues 775 to 784 (SEEEKMETDP) show a composition bias toward acidic residues. The segment covering 788 to 859 (QPEKAENKVE…DAGKKKVEHE (72 aa)) has biased composition (basic and acidic residues). Lys-795 participates in a covalent cross-link: Glycyl lysine isopeptide (Lys-Gly) (interchain with G-Cter in SUMO2). 2 positions are modified to phosphoserine: Ser-821 and Ser-824. Glycyl lysine isopeptide (Lys-Gly) (interchain with G-Cter in SUMO2) cross-links involve residues Lys-828 and Lys-855. A coiled-coil region spans residues 909–945 (KLRHFEELETIMDREKEALEQQRQQLLTERQNFHMEQ). Position 947 is an N6-acetyllysine (Lys-947). Disordered stretches follow at residues 955–1021 (QQME…PGPG) and 1041–1104 (IHPT…SATP). Residues 956–973 (QMEQQQQHGQTPQQAHQH) show a composition bias toward low complexity. Composition is skewed to pro residues over residues 994–1017 (QQPP…PGQI) and 1048–1057 (PTPPGMPPMP). The residue at position 1064 (Arg-1064) is an Asymmetric dimethylarginine. Pro residues predominate over residues 1073–1104 (MYPPPPQQQQPPPPADGVPPPPAPGPPASATP).

It belongs to the SMARCC family. In terms of assembly, component of the multiprotein chromatin-remodeling complexes SWI/SNF: SWI/SNF-A (BAF), SWI/SNF-B (PBAF) and related complexes. The canonical complex contains a catalytic subunit (either SMARCA4/BRG1/BAF190A or SMARCA2/BRM/BAF190B) and at least SMARCE1, ACTL6A/BAF53, SMARCC1/BAF155, SMARCC2/BAF170, and SMARCB1/SNF5/BAF47. Other subunits specific to each of the complexes may also be present permitting several possible combinations developmentally and tissue specific. Component of the BAF complex, which includes at least actin (ACTB), ARID1A/BAF250A, ARID1B/BAF250B, SMARCA2/BRM, SMARCA4/BRG1, ACTL6A/BAF53, ACTL6B/BAF53B, SMARCE1/BAF57, SMARCC1/BAF155, SMARCC2/BAF170, SMARCB1/SNF5/INI1, and one or more SMARCD1/BAF60A, SMARCD2/BAF60B, or SMARCD3/BAF60C. In muscle cells, the BAF complex also contains DPF3. Component of neural progenitors-specific chromatin remodeling complex (npBAF complex) composed of at least, ARID1A/BAF250A or ARID1B/BAF250B, SMARCD1/BAF60A, SMARCD3/BAF60C, SMARCA2/BRM/BAF190B, SMARCA4/BRG1/BAF190A, SMARCB1/BAF47, SMARCC1/BAF155, SMARCE1/BAF57, SMARCC2/BAF170, PHF10/BAF45A, ACTL6A/BAF53A and actin. Component of neuron-specific chromatin remodeling complex (nBAF complex) composed of at least, ARID1A/BAF250A or ARID1B/BAF250B, SMARCD1/BAF60A, SMARCD3/BAF60C, SMARCA2/BRM/BAF190B, SMARCA4/BRG1/BAF190A, SMARCB1/BAF47, SMARCC1/BAF155, SMARCE1/BAF57, SMARCC2/BAF170, DPF1/BAF45B, DPF3/BAF45C, ACTL6B/BAF53B and actin. Component of the SWI/SNF-B (PBAF) chromatin remodeling complex, at least composed of SMARCA4/BRG1, SMARCB1/BAF47/SNF5, ACTL6A/BAF53A or ACTL6B/BAF53B, SMARCE1/BAF57, SMARCD1/BAF60A, SMARCD2/BAF60B, perhaps SMARCD3/BAF60C, SMARCC1/BAF155, SMARCC2/BAF170, PBRM1/BAF180, ARID2/BAF200 and actin. Component of SWI/SNF (GBAF) subcomplex, which includes at least BICRA or BICRAL (mutually exclusive), BRD9, SS18, SMARCA2/BRM, SMARCA4/BRG1/BAF190A, ACTL6A/BAF53, SMARCC1/BAF155, and SMARCD1/BAF60A. May also interact with the SIN3A histone deacetylase transcription repressor complex in conjunction with SMARCA2 and SMARCA4. The minimal complex composed of SMARCC1 and SMARCA4 seems to be able to associate with cyclin such as CCNE1 or transcription factors such as KLF1 or GATA1. Interacts with NR3C1 and SMARD1. Interacts with TRIP12; leading to disrupt interaction between TRIP12 and SMARCE1 and prevent SMARCE1 ubiquitination. Interacts with CEBPB (when not methylated). Interacts with KDM6B. Interacts with MKKS; the interaction takes place predominantly in the cytoplasm and may modulate SMARCC1 location. Interacts with DPF2. Interacts with PRDM1/BLIMP1. Interacts with DPF3a (isoform 2 of DPF3/BAF45C) and with HDGFL2 in a DPF3a-dependent manner. In terms of tissue distribution, highly expressed in adult brain, testis and thymus.

It is found in the nucleus. The protein localises to the cytoplasm. In terms of biological role, involved in transcriptional activation and repression of select genes by chromatin remodeling (alteration of DNA-nucleosome topology). Component of SWI/SNF chromatin remodeling complexes that carry out key enzymatic activities, changing chromatin structure by altering DNA-histone contacts within a nucleosome in an ATP-dependent manner. May stimulate the ATPase activity of the catalytic subunit of the complex. Belongs to the neural progenitors-specific chromatin remodeling complex (npBAF complex) and the neuron-specific chromatin remodeling complex (nBAF complex). During neural development a switch from a stem/progenitor to a postmitotic chromatin remodeling mechanism occurs as neurons exit the cell cycle and become committed to their adult state. The transition from proliferating neural stem/progenitor cells to postmitotic neurons requires a switch in subunit composition of the npBAF and nBAF complexes. As neural progenitors exit mitosis and differentiate into neurons, npBAF complexes which contain ACTL6A/BAF53A and PHF10/BAF45A, are exchanged for homologous alternative ACTL6B/BAF53B and DPF1/BAF45B or DPF3/BAF45C subunits in neuron-specific complexes (nBAF). The npBAF complex is essential for the self-renewal/proliferative capacity of the multipotent neural stem cells. The nBAF complex along with CREST plays a role regulating the activity of genes essential for dendrite growth. The chain is SWI/SNF complex subunit SMARCC1 (Smarcc1) from Mus musculus (Mouse).